Consider the following 713-residue polypeptide: Probable tRNA (uracil-O(2)-)-methyltransferase (713 aa).

Disordered regions lie at residues 49–92 (TLRS…REGT) and 480–508 (LHSRQGHPQSRPGGAHAPSAPQTAAHDAG). Ser76 carries the post-translational modification Phosphoserine. The span at 79–89 (GEPESGPRASR) shows a compositional bias: basic and acidic residues. The residue at position 489 (Ser489) is a Phosphoserine. A C3H1-type zinc finger spans residues 669-698 (FKTRICWFFAHHPDGCVLPAAQCPFAHGPE).

This sequence belongs to the TRM44 family.

It localises to the cytoplasm. It carries out the reaction uridine(44) in tRNA(Ser) + S-adenosyl-L-methionine = 2'-O-methyluridine(44) in tRNA(Ser) + S-adenosyl-L-homocysteine + H(+). Functionally, probable adenosyl-L-methionine (AdoMet)-dependent tRNA (uracil-O(2)-)-methyltransferase. This chain is Probable tRNA (uracil-O(2)-)-methyltransferase (Trmt44), found in Mus musculus (Mouse).